Here is a 377-residue protein sequence, read N- to C-terminus: Tryptophan--tRNA ligase, mitochondrial (377 aa).

ATP is bound by residues glutamine 21 and 28–31; that span reads HLGN. Residues 22 to 31 carry the 'HIGH' region motif; it reads PTSSALHLGN. Aspartate 181 is an L-tryptophan binding site. ATP contacts are provided by residues 193-195, 242-246, and lysine 245; these read GED and KMSKS. A 'KMSKS' region motif is present at residues 242–246; the sequence is KMSKS.

It belongs to the class-I aminoacyl-tRNA synthetase family.

The protein resides in the mitochondrion matrix. It catalyses the reaction tRNA(Trp) + L-tryptophan + ATP = L-tryptophyl-tRNA(Trp) + AMP + diphosphate + H(+). The sequence is that of Tryptophan--tRNA ligase, mitochondrial (wars2) from Dictyostelium discoideum (Social amoeba).